The primary structure comprises 296 residues: Sulfate adenylyltransferase subunit 2 (296 aa).

Belongs to the PAPS reductase family. CysD subfamily. In terms of assembly, heterodimer composed of CysD, the smaller subunit, and CysN.

It carries out the reaction sulfate + ATP + H(+) = adenosine 5'-phosphosulfate + diphosphate. Its pathway is sulfur metabolism; hydrogen sulfide biosynthesis; sulfite from sulfate: step 1/3. In terms of biological role, with CysN forms the ATP sulfurylase (ATPS) that catalyzes the adenylation of sulfate producing adenosine 5'-phosphosulfate (APS) and diphosphate, the first enzymatic step in sulfur assimilation pathway. APS synthesis involves the formation of a high-energy phosphoric-sulfuric acid anhydride bond driven by GTP hydrolysis by CysN coupled to ATP hydrolysis by CysD. This chain is Sulfate adenylyltransferase subunit 2, found in Rhodospirillum rubrum (strain ATCC 11170 / ATH 1.1.1 / DSM 467 / LMG 4362 / NCIMB 8255 / S1).